Consider the following 277-residue polypeptide: Undecaprenyl-diphosphatase (277 aa).

The next 6 membrane-spanning stretches (helical) occupy residues 88-108 (MGWL…LFQD), 117-137 (MWIV…ADAV), 157-179 (FAQA…AGLL), 191-211 (SFLL…YKVV), 227-247 (LATV…LKFV), and 255-275 (FVWY…FGVI).

This sequence belongs to the UppP family.

Its subcellular location is the cell membrane. The enzyme catalyses di-trans,octa-cis-undecaprenyl diphosphate + H2O = di-trans,octa-cis-undecaprenyl phosphate + phosphate + H(+). Functionally, catalyzes the dephosphorylation of undecaprenyl diphosphate (UPP). Confers resistance to bacitracin. This chain is Undecaprenyl-diphosphatase, found in Pseudarthrobacter chlorophenolicus (strain ATCC 700700 / DSM 12829 / CIP 107037 / JCM 12360 / KCTC 9906 / NCIMB 13794 / A6) (Arthrobacter chlorophenolicus).